A 207-amino-acid chain; its full sequence is Succinyl-CoA:3-ketoacid coenzyme A transferase subunit B (207 aa).

Glu43 is an active-site residue.

It belongs to the 3-oxoacid CoA-transferase subunit B family. Heterodimer of a subunit A and a subunit B.

It catalyses the reaction a 3-oxo acid + succinyl-CoA = a 3-oxoacyl-CoA + succinate. The chain is Succinyl-CoA:3-ketoacid coenzyme A transferase subunit B (scoB) from Helicobacter pylori (strain J99 / ATCC 700824) (Campylobacter pylori J99).